We begin with the raw amino-acid sequence, 553 residues long: Dihydroxy-acid dehydratase (553 aa).

Asp78 is a Mg(2+) binding site. Position 119 (Cys119) interacts with [2Fe-2S] cluster. Mg(2+) contacts are provided by Asp120 and Lys121. Lys121 is subject to N6-carboxylysine. Residue Cys193 participates in [2Fe-2S] cluster binding. Glu441 is a Mg(2+) binding site. Ser467 (proton acceptor) is an active-site residue.

The protein belongs to the IlvD/Edd family. Homodimer. [2Fe-2S] cluster is required as a cofactor. It depends on Mg(2+) as a cofactor.

The enzyme catalyses (2R)-2,3-dihydroxy-3-methylbutanoate = 3-methyl-2-oxobutanoate + H2O. The catalysed reaction is (2R,3R)-2,3-dihydroxy-3-methylpentanoate = (S)-3-methyl-2-oxopentanoate + H2O. It participates in amino-acid biosynthesis; L-isoleucine biosynthesis; L-isoleucine from 2-oxobutanoate: step 3/4. The protein operates within amino-acid biosynthesis; L-valine biosynthesis; L-valine from pyruvate: step 3/4. Its function is as follows. Functions in the biosynthesis of branched-chain amino acids. Catalyzes the dehydration of (2R,3R)-2,3-dihydroxy-3-methylpentanoate (2,3-dihydroxy-3-methylvalerate) into 2-oxo-3-methylpentanoate (2-oxo-3-methylvalerate) and of (2R)-2,3-dihydroxy-3-methylbutanoate (2,3-dihydroxyisovalerate) into 2-oxo-3-methylbutanoate (2-oxoisovalerate), the penultimate precursor to L-isoleucine and L-valine, respectively. The protein is Dihydroxy-acid dehydratase of Geobacter sulfurreducens (strain ATCC 51573 / DSM 12127 / PCA).